The sequence spans 270 residues: MLGLEKKLTLYGFNNLTKTLSFNIYDVCYAKSEKAQKAYIEYIDEQYNSERLTKILCDVTEMIGAHVLNISKQDYEPQGASVNILITEEALPLHLIDESCNKGEGIAAQRDTIHAHLDKSHVTVHTYPEYHPDNAISTFRVDIDVSTCGMISPLNALDYLIGSFDSDIITIDYRVRGFTRDVEGKKFYIDHNITSIQDYIDDETLKKYDAIDVNVYQSNIFHTKMLIKEIELQNYLFNKDVNELLPKQRLEITNNLRKEMIEIFSGMNIY.

Residue Ser120 is the Schiff-base intermediate with substrate; via pyruvic acid of the active site. A Pyruvic acid (Ser); by autocatalysis modification is found at Ser120. Catalysis depends on His125, which acts as the Proton acceptor; for processing activity. The active-site Proton donor; for catalytic activity is the Cys148.

It belongs to the prokaryotic AdoMetDC family. Type 2 subfamily. As to quaternary structure, heterooctamer of four alpha and four beta chains arranged as a tetramer of alpha/beta heterodimers. It depends on pyruvate as a cofactor. In terms of processing, is synthesized initially as an inactive proenzyme. Formation of the active enzyme involves a self-maturation process in which the active site pyruvoyl group is generated from an internal serine residue via an autocatalytic post-translational modification. Two non-identical subunits are generated from the proenzyme in this reaction, and the pyruvate is formed at the N-terminus of the alpha chain, which is derived from the carboxyl end of the proenzyme. The post-translation cleavage follows an unusual pathway, termed non-hydrolytic serinolysis, in which the side chain hydroxyl group of the serine supplies its oxygen atom to form the C-terminus of the beta chain, while the remainder of the serine residue undergoes an oxidative deamination to produce ammonia and the pyruvoyl group blocking the N-terminus of the alpha chain.

The catalysed reaction is S-adenosyl-L-methionine + H(+) = S-adenosyl 3-(methylsulfanyl)propylamine + CO2. Its pathway is amine and polyamine biosynthesis; S-adenosylmethioninamine biosynthesis; S-adenosylmethioninamine from S-adenosyl-L-methionine: step 1/1. Catalyzes the decarboxylation of S-adenosylmethionine to S-adenosylmethioninamine (dcAdoMet), the propylamine donor required for the synthesis of the polyamines spermine and spermidine from the diamine putrescine. This Alkaliphilus oremlandii (strain OhILAs) (Clostridium oremlandii (strain OhILAs)) protein is S-adenosylmethionine decarboxylase proenzyme.